We begin with the raw amino-acid sequence, 659 residues long: Threonine--tRNA ligase (659 aa).

Residues 1-61 (MSAVPELRIT…ADGDVVEEIR (61 aa)) form the TGS domain. The tract at residues 260–555 (DHRKLGVELD…LLEHYAGAFP (296 aa)) is catalytic. C353, H404, and H532 together coordinate Zn(2+).

This sequence belongs to the class-II aminoacyl-tRNA synthetase family. Homodimer. Requires Zn(2+) as cofactor.

The protein localises to the cytoplasm. The catalysed reaction is tRNA(Thr) + L-threonine + ATP = L-threonyl-tRNA(Thr) + AMP + diphosphate + H(+). Functionally, catalyzes the attachment of threonine to tRNA(Thr) in a two-step reaction: L-threonine is first activated by ATP to form Thr-AMP and then transferred to the acceptor end of tRNA(Thr). Also edits incorrectly charged L-seryl-tRNA(Thr). The sequence is that of Threonine--tRNA ligase from Thermobifida fusca (strain YX).